A 90-amino-acid polypeptide reads, in one-letter code: Large ribosomal subunit protein eL33 (90 aa).

This sequence belongs to the eukaryotic ribosomal protein eL33 family.

The sequence is that of Large ribosomal subunit protein eL33 from Methanopyrus kandleri (strain AV19 / DSM 6324 / JCM 9639 / NBRC 100938).